The following is an 817-amino-acid chain: DNA mismatch repair protein MutS (817 aa).

604–611 (GPNMSGKS) serves as a coordination point for ATP.

This sequence belongs to the DNA mismatch repair MutS family.

Its function is as follows. This protein is involved in the repair of mismatches in DNA. It is possible that it carries out the mismatch recognition step. This protein has a weak ATPase activity. The protein is DNA mismatch repair protein MutS of Petrotoga mobilis (strain DSM 10674 / SJ95).